We begin with the raw amino-acid sequence, 267 residues long: Elsinochrome reductase 1 (267 aa).

Positions 26, 72, 99, and 132 each coordinate NADP(+). S149 functions as the Proton donor in the catalytic mechanism. Y163, K167, I196, and T198 together coordinate NADP(+). Y163 functions as the Proton acceptor in the catalytic mechanism. K167 serves as the catalytic Lowers pKa of active site Tyr.

Belongs to the short-chain dehydrogenases/reductases (SDR) family.

In terms of biological role, reductase; part of the gene cluster that mediates the biosynthesis of elsinochromes, pigments consisting of at least four interconvertible tautomers (A, B, C and D) that have a core phenolic quinone to which various side chains are attached and which play an important role in fungal pathogenesis. The non-reducing polyketide synthase PKS1 was proposed to iteratively catalyze decarboxylation between acetyl-CoA and malonyl-CoA subunits for polyketide chain elongation. The released polyketide undergoes cyclization to form an aromatic ring, and proceeds via serial modification steps to produce the heptaketide back- bone of elsinochrome. As elsinochrome has a symmetrical structure, two identical heptaketides are fused to form a core 1,2-dihydrobenzo-perylene ring structure, which can then be successively modified to produce the various derivatives of elsinochrome. Some of these reactions may be cooperatively carried out, at least in part, by the products of RDT1, OXR1 and PKS1. PRF1, embedded within the elsinochrome cluster possibly functions to stabilize some of the biosynthetic enzymes required for elsinochrome production. As prefoldin is a hexamer containing 2 a and 4 b subunits, additional prefoldin subunits, whose coding genes may not immediately link to the elsinochrome biosynthetic gene cluster, are required to fulfill the chaperone function. In addition, no methyltransferase-coding gene exists within the biosynthetic gene cluster, even though elsinochrome has four methyl groups at positions C3, C7, C8 and C12. Apparently, the identified gene cluster does not contain the entire entourage of genes responsible for elsinochrome biosynthesis. Once elsinochrome is synthesized, it must be exported outside the fungal cells, which is probably accomplished by the ECT1 transporter, to avoid toxicity. The polypeptide is Elsinochrome reductase 1 (Elsinoe fawcettii (Citrus scab fungus)).